The chain runs to 550 residues: Hydroxylamine reductase (550 aa).

Residues C3, C6, C18, and C25 each contribute to the [2Fe-2S] cluster site. Hybrid [4Fe-2O-2S] cluster-binding residues include H249, E273, C317, C405, C433, C458, E492, and K494. A Cysteine persulfide modification is found at C405.

The protein belongs to the HCP family. It depends on [2Fe-2S] cluster as a cofactor. Hybrid [4Fe-2O-2S] cluster serves as cofactor.

It is found in the cytoplasm. The catalysed reaction is A + NH4(+) + H2O = hydroxylamine + AH2 + H(+). Its function is as follows. Catalyzes the reduction of hydroxylamine to form NH(3) and H(2)O. The polypeptide is Hydroxylamine reductase (Salmonella dublin (strain CT_02021853)).